Here is a 158-residue protein sequence, read N- to C-terminus: 6,7-dimethyl-8-ribityllumazine synthase (158 aa).

5-amino-6-(D-ribitylamino)uracil is bound by residues F24, 58–60, and 82–84; these read AFE and AVI. A (2S)-2-hydroxy-3-oxobutyl phosphate-binding site is contributed by 87–88; it reads GT. The active-site Proton donor is the H90. Residue F115 coordinates 5-amino-6-(D-ribitylamino)uracil. Position 129 (R129) interacts with (2S)-2-hydroxy-3-oxobutyl phosphate.

It belongs to the DMRL synthase family. In terms of assembly, forms an icosahedral capsid composed of 60 subunits, arranged as a dodecamer of pentamers.

It catalyses the reaction (2S)-2-hydroxy-3-oxobutyl phosphate + 5-amino-6-(D-ribitylamino)uracil = 6,7-dimethyl-8-(1-D-ribityl)lumazine + phosphate + 2 H2O + H(+). It participates in cofactor biosynthesis; riboflavin biosynthesis; riboflavin from 2-hydroxy-3-oxobutyl phosphate and 5-amino-6-(D-ribitylamino)uracil: step 1/2. Its function is as follows. Catalyzes the formation of 6,7-dimethyl-8-ribityllumazine by condensation of 5-amino-6-(D-ribitylamino)uracil with 3,4-dihydroxy-2-butanone 4-phosphate. This is the penultimate step in the biosynthesis of riboflavin. This chain is 6,7-dimethyl-8-ribityllumazine synthase, found in Pseudomonas putida (strain GB-1).